The sequence spans 135 residues: MTPIYTIAAISLGASLGALARYGLGLALNAIFPPLPIGTLAANLIAAYVVGVTIAYVGTVPGLSPLWRLFMITGLAGGLSTFSTFTAELFSLLREGRLGMSAGMLGLHVGGSLALLMLGMLTIGLLRKSSLGIAE.

Transmembrane regions (helical) follow at residues 7–27 (IAAI…LGLA), 37–57 (IGTL…IAYV), 70–90 (FMIT…AELF), and 105–125 (LGLH…TIGL). Gly-77 and Ser-80 together coordinate Na(+).

Belongs to the fluoride channel Fluc/FEX (TC 1.A.43) family.

It is found in the cell inner membrane. The catalysed reaction is fluoride(in) = fluoride(out). With respect to regulation, na(+) is not transported, but it plays an essential structural role and its presence is essential for fluoride channel function. Fluoride-specific ion channel. Important for reducing fluoride concentration in the cell, thus reducing its toxicity. The sequence is that of Fluoride-specific ion channel FluC from Xanthomonas oryzae pv. oryzae (strain MAFF 311018).